A 199-amino-acid polypeptide reads, in one-letter code: Recombination protein RecR (199 aa).

Residues 58 to 73 (CKKCFNLTSEDECEIC) form a C4-type zinc finger. The Toprim domain maps to 81–175 (KLICVVAETK…KVTRIAYGLP (95 aa)).

The protein belongs to the RecR family.

Its function is as follows. May play a role in DNA repair. It seems to be involved in an RecBC-independent recombinational process of DNA repair. It may act with RecF and RecO. The polypeptide is Recombination protein RecR (Prochlorococcus marinus (strain MIT 9301)).